Consider the following 876-residue polypeptide: Phosphoenolpyruvate carboxylase (876 aa).

Residues His-138 and Lys-544 contribute to the active site.

This sequence belongs to the PEPCase type 1 family. The cofactor is Mg(2+).

The catalysed reaction is oxaloacetate + phosphate = phosphoenolpyruvate + hydrogencarbonate. In terms of biological role, forms oxaloacetate, a four-carbon dicarboxylic acid source for the tricarboxylic acid cycle. In Marinomonas sp. (strain MWYL1), this protein is Phosphoenolpyruvate carboxylase.